We begin with the raw amino-acid sequence, 121 residues long: Large ribosomal subunit protein bL19 (121 aa).

The protein belongs to the bacterial ribosomal protein bL19 family.

Functionally, this protein is located at the 30S-50S ribosomal subunit interface and may play a role in the structure and function of the aminoacyl-tRNA binding site. This chain is Large ribosomal subunit protein bL19 (rplS), found in Chlamydia muridarum (strain MoPn / Nigg).